The primary structure comprises 436 residues: MGSIGANNAVADPTPLFSSRVQKWEPGAIRSLLPLEALPGMISLVAGKPSPETFPIAEIAISLKDTPAGTGRIVVDGDELNQALQYGLPRGNAQLIQWFESLQRSVHGLDENGGWSCCIGNGSQELIHRVIQVFTDPGDPVLLETPAYPGVAGFLRADGQELIPVYSDAQGLNPASLEQALSEWPGDSPRPKVLYTTPTGSNPTGQSCTESRKAEILRLAKRFNFIILEDDAYYYLNYGDDKQRARSYLALERDVNGESGRVVRFDSLSKIVSPGMRLGILTAQAAVVDKVVRITENINLQPSSTTQLLALSLLRHWGQAGFLKHCAEAAEVYRRRRDVFVSAAERHLQGRATWVVPTAGMFVWLELKLPPEMDSFELLKSQGMKNGVLAIPGVAFMPGNEQTCYIRVSFSLVPERDMDEACRRIAGLVDRCACHS.

4 residues coordinate substrate: Arg-30, Tyr-86, Tyr-148, and Asn-202. Residue Lys-270 is modified to N6-(pyridoxal phosphate)lysine. A substrate-binding site is contributed by Arg-407.

Belongs to the class-I pyridoxal-phosphate-dependent aminotransferase family. Requires pyridoxal 5'-phosphate as cofactor.

The enzyme catalyses 3-phenylpyruvate + L-tryptophan = indole-3-pyruvate + L-phenylalanine. Its pathway is secondary metabolite biosynthesis. Its function is as follows. Aminotransferase; part of the gene cluster that mediates the biosynthesis of terrequinone A, an antitumor agent. The first step in the biosynthetic pathway for terrequinone A is formation of indole pyruvic acid (IPA) from L-tryptophan by the aminotransferase tdiD. The nonribosomal peptide synthase tdiA then immediately converts unstable IPA to didemethylasterriquinone D (DDAQ D), via condensation of 2 IPA molecules. The symmetric connectivity of the 2 IPA molecules is thought to arise by head-to-tail dual Claisen condensations facilitated by the TE domain. TdiB then catalyzes reverse prenylation by transferring dimethylallyl diphosphate to carbon atom 2' of DDAQ D, to yield asterriquinone C-1. Finally, tdiC and tdiE enzymes robustly convert asterriquinone C-1 to terrequinone A via a transformation involving regular prenylation at carbon atom 5, which requires elimination of the hydroxy group on C-5. This chain is Aminotransferase tdiD, found in Emericella nidulans (strain FGSC A4 / ATCC 38163 / CBS 112.46 / NRRL 194 / M139) (Aspergillus nidulans).